The sequence spans 404 residues: Iron-sulfur assembly protein IscA2 (404 aa).

A coiled-coil region spans residues lysine 244–asparagine 289.

It belongs to the HesB/IscA family. Dimer. Homotetramer. Interacts with ABCB6.

The protein resides in the mitochondrion. The protein operates within cofactor biosynthesis; iron-sulfur cluster biosynthesis. In terms of biological role, participates in iron-sulfur cluster formation (ISC) pathway for iron-sulfur (Fe-S) cluster biogenesis. Can bind and transfer [4Fe-4S] clusters to target apo-proteins. The polypeptide is Iron-sulfur assembly protein IscA2 (Plasmodium falciparum (isolate 3D7)).